Reading from the N-terminus, the 229-residue chain is Flagellar L-ring protein (229 aa).

A signal peptide spans 1 to 23 (MLSRLGARVLYCLAGLALLASGG). Residue C24 is the site of N-palmitoyl cysteine attachment. A lipid anchor (S-diacylglycerol cysteine) is attached at C24.

The protein belongs to the FlgH family. In terms of assembly, the basal body constitutes a major portion of the flagellar organelle and consists of four rings (L,P,S, and M) mounted on a central rod.

It localises to the cell outer membrane. It is found in the bacterial flagellum basal body. Its function is as follows. Assembles around the rod to form the L-ring and probably protects the motor/basal body from shearing forces during rotation. In Cupriavidus pinatubonensis (strain JMP 134 / LMG 1197) (Cupriavidus necator (strain JMP 134)), this protein is Flagellar L-ring protein.